Here is a 394-residue protein sequence, read N- to C-terminus: Phosphopentomutase (394 aa).

Positions 14, 287, 292, 328, 329, and 340 each coordinate Mn(2+).

Belongs to the phosphopentomutase family. Requires Mn(2+) as cofactor.

It localises to the cytoplasm. It catalyses the reaction 2-deoxy-alpha-D-ribose 1-phosphate = 2-deoxy-D-ribose 5-phosphate. The catalysed reaction is alpha-D-ribose 1-phosphate = D-ribose 5-phosphate. Its pathway is carbohydrate degradation; 2-deoxy-D-ribose 1-phosphate degradation; D-glyceraldehyde 3-phosphate and acetaldehyde from 2-deoxy-alpha-D-ribose 1-phosphate: step 1/2. In terms of biological role, isomerase that catalyzes the conversion of deoxy-ribose 1-phosphate (dRib-1-P) and ribose 1-phosphate (Rib-1-P) to deoxy-ribose 5-phosphate (dRib-5-P) and ribose 5-phosphate (Rib-5-P), respectively. This chain is Phosphopentomutase, found in Shouchella clausii (strain KSM-K16) (Alkalihalobacillus clausii).